The following is an 858-amino-acid chain: Myosin-K heavy chain (858 aa).

The 814-residue stretch at 7–820 (SGVDDLVLVS…TIFVMEDLLM (814 aa)) folds into the Myosin motor domain. 100–107 (GESGAGKT) serves as a coordination point for ATP. A disordered region spans residues 121–265 (SPNNSSGGGI…GGGYGGSSKT (145 aa)). Gly residues-rich tracts occupy residues 126-139 (SGGG…GNGG) and 157-182 (RGMG…SRGG). The span at 183–228 (GPPPTRGRGGPPPPIPQNRGAPPPVSNGGAPPPVARGPVAPPPTRG) shows a compositional bias: pro residues. A compositionally biased stretch (gly residues) spans 233 to 245 (RGGGPANRGGRGG). Residues 712–722 (PHYIRCIKPND) form an actin-binding region. A tail region spans residues 821–858 (QKIDPIGYKNRVQAYKENEKLAQMKQGKHSMKQKCLIQ).

It belongs to the TRAFAC class myosin-kinesin ATPase superfamily. Myosin family.

It is found in the cytoplasm. Its function is as follows. Myosins are actin-based motor molecules with ATPase activity. Involved in phagocytosis and motility, and in the maintenance and dynamics of cell cortex. This is Myosin-K heavy chain (myoK) from Dictyostelium discoideum (Social amoeba).